A 200-amino-acid chain; its full sequence is Holliday junction branch migration complex subunit RuvA (200 aa).

The segment at 1–63 is domain I; the sequence is MIASVRGEVL…EDSMTLYGFP (63 aa). A domain II region spans residues 64-142; that stretch reads DSESKELFGL…AVASTSGAVP (79 aa). The interval 142–146 is flexible linker; it reads PLGAG. The interval 147–200 is domain III; that stretch reads GGGSVRDQIVEALVGLGFPAKQAEQAADSVLAEAPESTTSTALRSALSLLGKTR.

It belongs to the RuvA family. As to quaternary structure, homotetramer. Forms an RuvA(8)-RuvB(12)-Holliday junction (HJ) complex. HJ DNA is sandwiched between 2 RuvA tetramers; dsDNA enters through RuvA and exits via RuvB. An RuvB hexamer assembles on each DNA strand where it exits the tetramer. Each RuvB hexamer is contacted by two RuvA subunits (via domain III) on 2 adjacent RuvB subunits; this complex drives branch migration. In the full resolvosome a probable DNA-RuvA(4)-RuvB(12)-RuvC(2) complex forms which resolves the HJ.

It is found in the cytoplasm. Its function is as follows. The RuvA-RuvB-RuvC complex processes Holliday junction (HJ) DNA during genetic recombination and DNA repair, while the RuvA-RuvB complex plays an important role in the rescue of blocked DNA replication forks via replication fork reversal (RFR). RuvA specifically binds to HJ cruciform DNA, conferring on it an open structure. The RuvB hexamer acts as an ATP-dependent pump, pulling dsDNA into and through the RuvAB complex. HJ branch migration allows RuvC to scan DNA until it finds its consensus sequence, where it cleaves and resolves the cruciform DNA. This chain is Holliday junction branch migration complex subunit RuvA, found in Rhodococcus jostii (strain RHA1).